The primary structure comprises 72 residues: Translation initiation factor IF-1 (72 aa).

In terms of domain architecture, S1-like spans 1-72 (MSKEEAIEVE…TRGRITYRAK (72 aa)).

It belongs to the IF-1 family. As to quaternary structure, component of the 30S ribosomal translation pre-initiation complex which assembles on the 30S ribosome in the order IF-2 and IF-3, IF-1 and N-formylmethionyl-tRNA(fMet); mRNA recruitment can occur at any time during PIC assembly.

The protein localises to the cytoplasm. Functionally, one of the essential components for the initiation of protein synthesis. Stabilizes the binding of IF-2 and IF-3 on the 30S subunit to which N-formylmethionyl-tRNA(fMet) subsequently binds. Helps modulate mRNA selection, yielding the 30S pre-initiation complex (PIC). Upon addition of the 50S ribosomal subunit IF-1, IF-2 and IF-3 are released leaving the mature 70S translation initiation complex. This chain is Translation initiation factor IF-1, found in Geobacter sulfurreducens (strain ATCC 51573 / DSM 12127 / PCA).